A 363-amino-acid polypeptide reads, in one-letter code: UDP-N-acetylglucosamine--N-acetylmuramyl-(pentapeptide) pyrophosphoryl-undecaprenol N-acetylglucosamine transferase (363 aa).

UDP-N-acetyl-alpha-D-glucosamine-binding positions include 14–16 (TGG), Arg171, Ser200, and Gln290.

This sequence belongs to the glycosyltransferase 28 family. MurG subfamily.

Its subcellular location is the cell inner membrane. The enzyme catalyses di-trans,octa-cis-undecaprenyl diphospho-N-acetyl-alpha-D-muramoyl-L-alanyl-D-glutamyl-meso-2,6-diaminopimeloyl-D-alanyl-D-alanine + UDP-N-acetyl-alpha-D-glucosamine = di-trans,octa-cis-undecaprenyl diphospho-[N-acetyl-alpha-D-glucosaminyl-(1-&gt;4)]-N-acetyl-alpha-D-muramoyl-L-alanyl-D-glutamyl-meso-2,6-diaminopimeloyl-D-alanyl-D-alanine + UDP + H(+). It participates in cell wall biogenesis; peptidoglycan biosynthesis. Functionally, cell wall formation. Catalyzes the transfer of a GlcNAc subunit on undecaprenyl-pyrophosphoryl-MurNAc-pentapeptide (lipid intermediate I) to form undecaprenyl-pyrophosphoryl-MurNAc-(pentapeptide)GlcNAc (lipid intermediate II). This is UDP-N-acetylglucosamine--N-acetylmuramyl-(pentapeptide) pyrophosphoryl-undecaprenol N-acetylglucosamine transferase from Borrelia garinii subsp. bavariensis (strain ATCC BAA-2496 / DSM 23469 / PBi) (Borreliella bavariensis).